A 362-amino-acid polypeptide reads, in one-letter code: Chorismate synthase (362 aa).

Position 46 (Arg-46) interacts with NADP(+). Residues 121–123, 237–238, Gly-277, 292–296, and Arg-318 contribute to the FMN site; these read RAS, NA, and KPTPS.

This sequence belongs to the chorismate synthase family. In terms of assembly, homotetramer. The cofactor is FMNH2.

It carries out the reaction 5-O-(1-carboxyvinyl)-3-phosphoshikimate = chorismate + phosphate. It participates in metabolic intermediate biosynthesis; chorismate biosynthesis; chorismate from D-erythrose 4-phosphate and phosphoenolpyruvate: step 7/7. In terms of biological role, catalyzes the anti-1,4-elimination of the C-3 phosphate and the C-6 proR hydrogen from 5-enolpyruvylshikimate-3-phosphate (EPSP) to yield chorismate, which is the branch point compound that serves as the starting substrate for the three terminal pathways of aromatic amino acid biosynthesis. This reaction introduces a second double bond into the aromatic ring system. In Campylobacter lari (strain RM2100 / D67 / ATCC BAA-1060), this protein is Chorismate synthase.